Reading from the N-terminus, the 367-residue chain is Choline-phosphate cytidylyltransferase A (367 aa).

An N-acetylmethionine modification is found at M1. The interval 1–31 (MDAQSSAKVNSRKRRKEVPGPNGATEEDGIP) is disordered. An N6-acetyllysine modification is found at K8. 4 residues coordinate CTP: I84, F85, H92, and K122. K122 and W151 together coordinate phosphocholine. Positions 168, 169, 173, 195, 196, 197, and 200 each coordinate CTP. Amphipathic stretches follow at residues 228 to 287 (KELN…EFIG) and 298 to 315 (ALKHMLKEGKGRMLQAIS). A Phosphoserine modification is found at S233. The tract at residues 272–293 (IDLIQKWEEKSREFIGSFLEMF) is autoinhibitory (AI). The segment at 313-367 (AISPKQSPSSSPTHERSPSPSFRWPFSGKTSPSSSPASLSRCKAVTCDISEDEED) is disordered. S315 is subject to Phosphoserine; by PKC. Positions 315 to 324 (SPKQSPSSSP) are enriched in polar residues. 4 positions are modified to phosphoserine: S319, S321, S322, and S323. Copy 1 of the repeat occupies 319–324 (SPSSSP). The interval 319–348 (SPSSSPTHERSPSPSFRWPFSGKTSPSSSP) is 3 X repeats. T325 is modified (phosphothreonine). Phosphoserine occurs at positions 329 and 331. A 2; approximate repeat occupies 329–333 (SPSPS). The span at 330-352 (PSPSFRWPFSGKTSPSSSPASLS) shows a compositional bias: low complexity. The residue at position 333 (S333) is a Phosphoserine; by PKC. T342 carries the phosphothreonine modification. Residues S343, S345, S346, S347, S350, and S352 each carry the phosphoserine modification. Copy 3 of the repeat occupies 343 to 348 (SPSSSP). T358 carries the phosphothreonine modification. S362 is modified (phosphoserine; by CK2).

Belongs to the cytidylyltransferase family. As to quaternary structure, homodimer. Post-translationally, the serine residues of the C-terminus are phosphorylated. The inactive soluble form is stabilized by phosphorylation, the active membrane bound form is promoted by anionic lipids or diacylglycerol, and is stabilized by dephosphorylation. In terms of processing, the N-terminus is blocked. Monoubiquitinated by the SCF(FBXL2) complex, leading to proteasomal degradation.

It is found in the cytoplasm. Its subcellular location is the cytosol. The protein localises to the membrane. The protein resides in the endoplasmic reticulum membrane. It localises to the nucleus. It carries out the reaction phosphocholine + CTP + H(+) = CDP-choline + diphosphate. It participates in phospholipid metabolism; phosphatidylcholine biosynthesis; phosphatidylcholine from phosphocholine: step 1/2. Its activity is regulated as follows. Interconverts between an inactive cytosolic form and an active membrane-bound form. Activation involves disruption of an inhibitory interaction between helices at the base of the active site and the autoinhibitory (AI) region. Activated by N-methylethanolamine. Activated by oleic acid-containing phosphatidylcholine vesicles. In terms of biological role, catalyzes the key rate-limiting step in the CDP-choline pathway for phosphatidylcholine biosynthesis. The polypeptide is Choline-phosphate cytidylyltransferase A (Pcyt1a) (Rattus norvegicus (Rat)).